Consider the following 366-residue polypeptide: Putative F-box protein At3g13624 (366 aa).

The region spanning 1–51 (MTTISDLPEDVVEEILPRVPLTSLSAVRSICKTWNTLSKNRVLCKAAVKKQ) is the F-box domain.

The protein is Putative F-box protein At3g13624 of Arabidopsis thaliana (Mouse-ear cress).